Consider the following 636-residue polypeptide: MYSLLETINSPADLRRLPRAQLKALADELRAYVIDSVSQTGGHLSSNLGTVELTVALHYVFNTPDDRLVWDVGHQTYPHKILTGRRERMGTLRQLGGLSGFPRRDESEYDTFGTAHSSTSISAALGMALAAEFKGENRNAVAVIGDGSMSAGMAFEALNNAGVHDHCKLLVVLNDNDMSISPPVGALNRHLAQLMSGRFYASARHVGKKVLQVAPPLLELARRLESHAKGMVVPAAVFESFGFNYIGPIDGHDLESLIPTLENIRHLMATGAGPQFLHVVTKKGQGYKLAEADPIAYHGPGKFDPSMGLQKSSAPAKQTFTQVFGRWLCDMAEHDPRLVGITPAMREGSGMVEFHKRFPKRYHDVGIAEQHAVTFAAGMACEGLKPVLAIYSTFLQRGYDQLIHDVALQNLPVVFALDRAGLVGADGATHAGAYDIPYLRCIPNMGIACPADENECRKLLTTAFEQDSPVAVRYPRGAGAGVEPEAGLKSLPFGKGEIRREGSGIAILAFGTLLYPALQAAEKLGATVVNMRWAKPLDTELLLKVAAGHEVLVTLEEGAIMGGAGSAVGEALQAAGVVKPLLQLGLKDEFIEHGEVAVLLALQGLDAAGIEAAVRSRFGSFKSTDPLAKVMLKSVA.

Thiamine diphosphate-binding positions include His74 and 115–117 (AHS). A Mg(2+)-binding site is contributed by Asp146. Thiamine diphosphate contacts are provided by residues 147-148 (GS), Asn176, Tyr287, and Glu369. Residue Asn176 participates in Mg(2+) binding.

This sequence belongs to the transketolase family. DXPS subfamily. Homodimer. Mg(2+) serves as cofactor. It depends on thiamine diphosphate as a cofactor.

The enzyme catalyses D-glyceraldehyde 3-phosphate + pyruvate + H(+) = 1-deoxy-D-xylulose 5-phosphate + CO2. It participates in metabolic intermediate biosynthesis; 1-deoxy-D-xylulose 5-phosphate biosynthesis; 1-deoxy-D-xylulose 5-phosphate from D-glyceraldehyde 3-phosphate and pyruvate: step 1/1. Its function is as follows. Catalyzes the acyloin condensation reaction between C atoms 2 and 3 of pyruvate and glyceraldehyde 3-phosphate to yield 1-deoxy-D-xylulose-5-phosphate (DXP). The polypeptide is 1-deoxy-D-xylulose-5-phosphate synthase (Polaromonas naphthalenivorans (strain CJ2)).